Consider the following 221-residue polypeptide: Interleukin-12 subunit alpha (221 aa).

Positions 1–25 (MCPLRSLLLISTLVLLHHLPHLSLG) are cleaved as a signal peptide. Intrachain disulfides connect Cys39/Cys112, Cys66/Cys198, and Cys87/Cys125. Asn95 carries an N-linked (GlcNAc...) asparagine glycan.

It belongs to the IL-6 superfamily. Heterodimer with IL12B; disulfide-linked. This heterodimer is known as interleukin IL-12. Heterodimer with EBI3/IL27B; not disulfide-linked. This heterodimer is known as interleukin IL-35. Interacts with NBR1; this interaction promotes IL-12 secretion.

It localises to the secreted. Functionally, heterodimerizes with IL12B to form the IL-12 cytokine or with EBI3/IL27B to form the IL-35 cytokine. IL-12 is primarily produced by professional antigen-presenting cells (APCs) such as B-cells and dendritic cells (DCs) as well as macrophages and granulocytes and regulates T-cell and natural killer-cell responses, induces the production of interferon-gamma (IFN-gamma), favors the differentiation of T-helper 1 (Th1) cells and is an important link between innate resistance and adaptive immunity. Mechanistically, exerts its biological effects through a receptor composed of IL12R1 and IL12R2 subunits. Binding to the receptor results in the rapid tyrosine phosphorylation of a number of cellular substrates including the JAK family kinases TYK2 and JAK2. In turn, recruited STAT4 gets phosphorylated and translocates to the nucleus where it regulates cytokine/growth factor responsive genes. As part of IL-35, plays essential roles in maintaining the immune homeostasis of the liver microenvironment and also functions as an immune-suppressive cytokine. Mediates biological events through unconventional receptors composed of IL12RB2 and gp130/IL6ST heterodimers or homodimers. Signaling requires the transcription factors STAT1 and STAT4, which form a unique heterodimer that binds to distinct DNA sites. This chain is Interleukin-12 subunit alpha (IL12A), found in Capra hircus (Goat).